We begin with the raw amino-acid sequence, 347 residues long: MTAEKSKALAAALAQIEKQFGKGSIMRMGDGEAAEDIQVVSTGSLGLDIALGVGGLPRGRVVEIYGPESSGKTTLTLQVIAELQKLGGTAAFIDAEHALDVQYAAKLGVNVPELLISQPDTGEQALEITDALVRSGSIDMIVIDSVAALVPKAEIEGEMGDSLPGLQARLMSQALRKLTGTIKRTNCLVIFINQIRMKIGVMFGNPETTTGGNALKFYSSVRLDIRRIGSIKKNDEVIGNETRVKVVKNKVSPPFREAIFDILYGEGISRQGEIIDLGVQAKIVDKAGAWYSYNGEKIGQGKDNAREFLRENPEIAREIENRIRESLGVVAMPDGAGNEAEAMDEEE.

66–73 contacts ATP; that stretch reads GPESSGKT.

It belongs to the RecA family.

It localises to the cytoplasm. Functionally, can catalyze the hydrolysis of ATP in the presence of single-stranded DNA, the ATP-dependent uptake of single-stranded DNA by duplex DNA, and the ATP-dependent hybridization of homologous single-stranded DNAs. It interacts with LexA causing its activation and leading to its autocatalytic cleavage. This chain is Protein RecA, found in Burkholderia cepacia (Pseudomonas cepacia).